A 130-amino-acid polypeptide reads, in one-letter code: S-protein homolog 32 (130 aa).

An N-terminal signal peptide occupies residues 1-21 (MKYFTIFVFVFSLCMLGHVSG).

It belongs to the plant self-incompatibility (S1) protein family.

The protein resides in the secreted. The chain is S-protein homolog 32 from Arabidopsis thaliana (Mouse-ear cress).